The chain runs to 258 residues: UDP-N-acetylenolpyruvoylglucosamine reductase (258 aa).

Arg142 is a catalytic residue. Ser184 functions as the Proton donor in the catalytic mechanism. The active site involves Glu254.

The protein belongs to the MurB family. Requires FAD as cofactor.

The protein localises to the cytoplasm. It carries out the reaction UDP-N-acetyl-alpha-D-muramate + NADP(+) = UDP-N-acetyl-3-O-(1-carboxyvinyl)-alpha-D-glucosamine + NADPH + H(+). It participates in cell wall biogenesis; peptidoglycan biosynthesis. Its function is as follows. Cell wall formation. The polypeptide is UDP-N-acetylenolpyruvoylglucosamine reductase (Campylobacter jejuni (strain RM1221)).